We begin with the raw amino-acid sequence, 313 residues long: Dehydrogenase/reductase SDR family member 1 (313 aa).

The residue at position 2 (A2) is an N-acetylalanine. Residue I19 participates in NAD(+) binding. R21 is modified (omega-N-methylarginine). Position 64 (D64) interacts with NAD(+). Substrate is bound at residue S151. The NAD(+) site is built by Y163, K167, and T198. The Proton acceptor role is filled by Y163. The interval 235–313 is required for ER localization; it reads CVVALATDPN…WIIALYTSKF (79 aa).

It belongs to the short-chain dehydrogenases/reductases (SDR) family. In terms of tissue distribution, detected in heart, liver, adrenal glands, and at low levels in skeletal muscle, kidney, pancreas and brain.

Its subcellular location is the endoplasmic reticulum. It carries out the reaction 17alpha-estradiol + NADP(+) = estrone + NADPH + H(+). The catalysed reaction is testosterone + NADP(+) = androst-4-ene-3,17-dione + NADPH + H(+). The enzyme catalyses prostaglandin E1 + NADPH + H(+) = prostaglandin F1 + NADP(+). It catalyses the reaction isatin + NADPH + H(+) = 3-hydroxyindolin-2-one + NADP(+). Functionally, NADPH-dependent oxidoreductase which catalyzes the reduction of steroids (estrone, androstene-3,17-dione and cortisone) as well as prostaglandin E1, isatin and xenobiotics in vitro. May have a role in steroid and/or xenobiotic metabolism. The sequence is that of Dehydrogenase/reductase SDR family member 1 from Homo sapiens (Human).